A 2289-amino-acid polypeptide reads, in one-letter code: DNA polymerase II large subunit (2289 aa).

Disordered regions lie at residues Ile-279 to Ala-330 and Ser-544 to Asp-563. Basic and acidic residues predominate over residues Gly-292–Asn-304. Acidic residues predominate over residues Glu-305–Asn-318. Over residues Ser-544–Ala-557 the composition is skewed to polar residues. 2 consecutive DOD-type homing endonuclease domains span residues Leu-1222–Ile-1367 and Leu-1755–Val-1911.

The protein belongs to the archaeal DNA polymerase II family. Heterodimer of a large subunit and a small subunit. Post-translationally, this protein undergoes a protein self splicing that involves a post-translational excision of the intervening region (intein) followed by peptide ligation.

The enzyme catalyses DNA(n) + a 2'-deoxyribonucleoside 5'-triphosphate = DNA(n+1) + diphosphate. It carries out the reaction Exonucleolytic cleavage in the 3'- to 5'-direction to yield nucleoside 5'-phosphates.. Possesses two activities: a DNA synthesis (polymerase) and an exonucleolytic activity that degrades single-stranded DNA in the 3'- to 5'-direction. Has a template-primer preference which is characteristic of a replicative DNA polymerase. This Haloquadratum walsbyi (strain DSM 16790 / HBSQ001) protein is DNA polymerase II large subunit.